Here is a 306-residue protein sequence, read N- to C-terminus: Glutaminase (306 aa).

Substrate-binding residues include Ser-61, Asn-111, Glu-155, Asn-162, Tyr-186, Tyr-238, and Val-256.

The protein belongs to the glutaminase family. As to quaternary structure, homotetramer.

It catalyses the reaction L-glutamine + H2O = L-glutamate + NH4(+). This is Glutaminase from Pseudomonas entomophila (strain L48).